The sequence spans 23 residues: Endochitinase B (23 aa).

It belongs to the glycosyl hydrolase 19 family. Chitinase class I subfamily.

The catalysed reaction is Random endo-hydrolysis of N-acetyl-beta-D-glucosaminide (1-&gt;4)-beta-linkages in chitin and chitodextrins.. In terms of biological role, defense against chitin-containing fungal pathogens. This chain is Endochitinase B, found in Pisum sativum (Garden pea).